The sequence spans 181 residues: Major urinary protein 11 (181 aa).

An N-terminal signal peptide occupies residues 1–19 (MKMLLLLLCLGLTLVCVHA). Cys83 and Cys176 are joined by a disulfide.

It belongs to the calycin superfamily. Lipocalin family.

The protein localises to the secreted. Functionally, major urinary proteins (Mups) bind pheromones, and thus stabilize them to allow slow release into the air from urine marks. May protect pheromones from oxidation. May also act as pheromones themselves. In this context, they play a role in the regulation of social behaviors, such as aggression, mating, pup-suckling, territory establishment and dominance. Binds the pheromone analog 2-sec-butyl-4,5-dihydrothiazole (SBT) in vitro. The protein is Major urinary protein 11 of Mus musculus (Mouse).